The following is a 168-amino-acid chain: Protein-export protein SecB (168 aa).

The span at 1–10 (MSDQGTNNGE) shows a compositional bias: polar residues. The disordered stretch occupies residues 1–22 (MSDQGTNNGESGNGGAQNGEAP).

It belongs to the SecB family. Homotetramer, a dimer of dimers. One homotetramer interacts with 1 SecA dimer.

The protein resides in the cytoplasm. One of the proteins required for the normal export of preproteins out of the cell cytoplasm. It is a molecular chaperone that binds to a subset of precursor proteins, maintaining them in a translocation-competent state. It also specifically binds to its receptor SecA. The polypeptide is Protein-export protein SecB (Parvibaculum lavamentivorans (strain DS-1 / DSM 13023 / NCIMB 13966)).